A 385-amino-acid chain; its full sequence is F-box only protein 4 (385 aa).

2 positions are modified to phosphoserine: serine 11 and serine 46. An F-box domain is found at 54-100 (TSALTRLPVDVQLYILSFLSPHDLCQLGSTDHYWNKTIRDPILWRYF).

As to quaternary structure, homodimer. Part of the SCF (SKP1-CUL1-F-box) E3 ubiquitin-protein ligase complex SCF(FBXO4) formed of CUL1, SKP1, RBX1 and FBXO4. Interacts with TERF1; this interaction is prevented in the presence of GNL3L. Identified in a complex with CRYAB and CCND1. Post-translationally, phosphorylation at Ser-11 varies during the cell cycle. It is low in resting cells and high in the S phase and the G2/M phase of the cell cycle. Phosphorylation is decreased during late G1 phase. Phosphorylation at Ser-11 is important for homodimerization and for optimal ubiquitin ligase activity towards CCND1.

The protein localises to the cytoplasm. Its pathway is protein modification; protein ubiquitination. Its function is as follows. Substrate recognition component of a SCF (SKP1-CUL1-F-box protein) E3 ubiquitin-protein ligase complex that mediates the ubiquitination and subsequent proteasomal degradation of target proteins. Promotes ubiquitination of cyclin-D1 (CCND1) and its subsequent proteasomal degradation. However, it does not act as a major regulator of CCND1 stability during the G1/S transition. Recognizes TERF1 and promotes its ubiquitination together with UBE2D1. Promotes ubiquitination of FXR1 following phosphorylation of FXR1 by GSK3B, leading to FXR1 degradation by the proteasome. The sequence is that of F-box only protein 4 from Mus musculus (Mouse).